A 191-amino-acid chain; its full sequence is Large ribosomal subunit protein uL29m (191 aa).

The protein belongs to the universal ribosomal protein uL29 family. As to quaternary structure, component of the mitochondrial large ribosomal subunit. Mature mitochondrial ribosomes consist of a small (37S) and a large (54S) subunit. The 37S subunit contains at least 33 different proteins and 1 molecule of RNA (15S). The 54S subunit contains at least 45 different proteins and 1 molecule of RNA (21S).

Its subcellular location is the mitochondrion. The sequence is that of Large ribosomal subunit protein uL29m (MRPL4) from Sclerotinia sclerotiorum (strain ATCC 18683 / 1980 / Ss-1) (White mold).